Here is a 177-residue protein sequence, read N- to C-terminus: Isopentenyl-diphosphate Delta-isomerase (177 aa).

Mn(2+) contacts are provided by histidine 22 and histidine 28. A Nudix hydrolase domain is found at 26-160; the sequence is LRHMAISVFV…PERFTPWLRI (135 aa). Residue cysteine 62 is part of the active site. Residue histidine 64 participates in Mn(2+) binding. Glutamate 82 is a binding site for Mg(2+). Mn(2+)-binding residues include glutamate 108 and glutamate 110. Glutamate 110 is an active-site residue.

This sequence belongs to the IPP isomerase type 1 family. Mg(2+) is required as a cofactor. Requires Mn(2+) as cofactor.

It is found in the cytoplasm. The enzyme catalyses isopentenyl diphosphate = dimethylallyl diphosphate. It functions in the pathway isoprenoid biosynthesis; dimethylallyl diphosphate biosynthesis; dimethylallyl diphosphate from isopentenyl diphosphate: step 1/1. It participates in porphyrin-containing compound metabolism; chlorophyll biosynthesis. Functionally, catalyzes the 1,3-allylic rearrangement of the homoallylic substrate isopentenyl (IPP) to its highly electrophilic allylic isomer, dimethylallyl diphosphate (DMAPP). In Cereibacter sphaeroides (strain KD131 / KCTC 12085) (Rhodobacter sphaeroides), this protein is Isopentenyl-diphosphate Delta-isomerase.